The sequence spans 515 residues: Maturase K (515 aa).

The protein belongs to the intron maturase 2 family. MatK subfamily.

Its subcellular location is the plastid. The protein localises to the chloroplast. Functionally, usually encoded in the trnK tRNA gene intron. Probably assists in splicing its own and other chloroplast group II introns. This is Maturase K from Cedrus atlantica (Atlas cedar).